A 168-amino-acid chain; its full sequence is DOMON domain-containing protein Y73F4A.2 (168 aa).

The N-terminal stretch at 1 to 18 (MFRSIAVLSALLFAFASA) is a signal peptide. Residues 26-143 (SDFEVYWRFA…CQKWRFVKSG (118 aa)) form the DOMON domain. A glycan (N-linked (GlcNAc...) asparagine) is linked at N36. A disordered region spans residues 148 to 168 (GQLTRNDKSPKEKKVCPMECN). Residues 152 to 168 (RNDKSPKEKKVCPMECN) show a composition bias toward basic and acidic residues.

Its subcellular location is the secreted. The protein is DOMON domain-containing protein Y73F4A.2 of Caenorhabditis elegans.